Reading from the N-terminus, the 255-residue chain is Aspartate/glutamate leucyltransferase (255 aa).

It belongs to the R-transferase family. Bpt subfamily.

It is found in the cytoplasm. It catalyses the reaction N-terminal L-glutamyl-[protein] + L-leucyl-tRNA(Leu) = N-terminal L-leucyl-L-glutamyl-[protein] + tRNA(Leu) + H(+). It carries out the reaction N-terminal L-aspartyl-[protein] + L-leucyl-tRNA(Leu) = N-terminal L-leucyl-L-aspartyl-[protein] + tRNA(Leu) + H(+). Functionally, functions in the N-end rule pathway of protein degradation where it conjugates Leu from its aminoacyl-tRNA to the N-termini of proteins containing an N-terminal aspartate or glutamate. This is Aspartate/glutamate leucyltransferase from Leptospira borgpetersenii serovar Hardjo-bovis (strain JB197).